A 1401-amino-acid polypeptide reads, in one-letter code: MGLEHTFYPAEDRFEPLLEHSEPVNFVPKENAKSYVRQGFASPHQSLMDNLVDSTESTKRSENFVSHIPLTPSHSGQSEKLMSTRTSHSPYISPTMSYTNHSPANLTRNSSFNHQHYSTTLRSPPSMRGRGIDVNSSHYPHISRPRTSSDSQKMYTRAPVDYYYIQENPYFNNIDQDSISDKSLPSTNQSLHHSEEDTESDNDFSESIHPEFDIDVFYKVSNILYDESDLQDPEKRERLEWHSMLSSVLKGDVMQTEKRRLRLTEPDGHSGTYISEVWLGLQAWLHGRLNADQAEVIRKSREGVEPVLREVIDFQIQDEETTKPPLEQVTEILEKVEQCKQFYISSREMEENVPLSASKEFNYKLNALISWSNVMESIQVETLVLQKWVGNDEFDLTMRTPQFNYDGVENTSSFVERIFRQSGLQRTFEQRTLTTLNRIIHQAKQTISENAQAFEEMKLPTYEDKLLPLVRFPIKLLEEALRLRLAYAKKIKGPNFLIVDSMLDDFKIALSVAVRIKREYIKIASPSPGWSLPTNVDEDYDNVLLDSLKFYFKLLTLKLSSGNKNLYFKEIDFLENEWAFLNEHIYWINGGDIHMAGQFSYLSNSLLLNVHRYVESHLNGPTERTAASLTNWYSTLLKNTQIRFRKILRFSETLNSRFENASDFVISEGHLPDLVNRLSTTGHFLAYTANLERDGVFVIADHTLSENPEALKALLFSKDISNLETIQQNCSYVLILCPVHPIVWKGRIEKVDVPDFSVDLKTNRVRIIASNKREHLQAAKSVFQSISGDLVTLAVECRSSITRVYKEFIRLSKLCMRISSTVVDCVSAVREACSGVNCHDLIYHVFSFAAEFGQRILRFLSFDSYWQTKLKRKITSLAVEWISFICDECDLMDRKTFRWGVGALEFLMLMIRGNNILLIDDAMFLKIREKVGKSMAFLLTHFDVLGAKSKVAAKLQRESTEVSSSPRLTSFGDVEEEALSIQLLQKETMLRIDELEIERNNTLLERLAIGHVLDDSVFRNRDFIKLASSFSNITIRWQQGHFVRSGMFGDVYTGVNMETGDLLAVKEIKLQDSRTFRSTVDQIHNEMTVLERLNHPNVVTYYGVEVHREKVYIFMEFCQGGSLADLLAHGRIEDENVLKVYVVQLLEGLAYIHSQHILHRDIKPANILLDHRGMIKYSDFGSALYVSPPTDPEVRYEDIQPELQHLAGTPMYMAPEIILGTKKGDFGAMDIWSLGCVILEMMTGSTPWSEMDNEWAIMYHVAAMHTPSIPQNEKISSLARDFIEQCFERDPEQRPRAVDLLTHPWITDFRKKTIITMPPATITKKTSLSHTITEEKTAQLLAGRHDDSKAETDSLAASYKEESALPVASNVGLRQPNELRIDSINLPPAIVTPDTINYSVD.

Disordered stretches follow at residues 67–99 (HIPL…MSYT) and 176–205 (QDSI…NDFS). Composition is skewed to polar residues over residues 72-99 (PSHS…MSYT) and 176-191 (QDSI…NQSL). Residues 1037–1306 (WQQGHFVRSG…AVDLLTHPWI (270 aa)) form the Protein kinase domain. ATP is bound by residues 1043 to 1051 (VRSGMFGDV) and K1066. Catalysis depends on D1161, which acts as the Proton acceptor.

The protein belongs to the protein kinase superfamily. STE Ser/Thr protein kinase family. MAP kinase kinase kinase subfamily.

It catalyses the reaction L-seryl-[protein] + ATP = O-phospho-L-seryl-[protein] + ADP + H(+). The enzyme catalyses L-threonyl-[protein] + ATP = O-phospho-L-threonyl-[protein] + ADP + H(+). Involved in a signal transduction pathway that is activated in under conditions of heat shock, oxidative stress or limited nutrition. Unlike win1, it is not activated by changes in the osmolarity of the extracellular environment. Activates the wis1 MAP kinase kinase by phosphorylation. The chain is MAP kinase kinase kinase wis4 (wis4) from Schizosaccharomyces pombe (strain 972 / ATCC 24843) (Fission yeast).